Consider the following 225-residue polypeptide: MSNLKLDVHTADGKTNGSVELPASIFDVEASVALMHQVVTAQLAAKRQGTHATKGRGEVRGGGRKPFRQKGTGRARQGSIRAPHFTGGGTVHGPQPRDYSQRTPKKMKAAALRGALSDRARHSRIHVIEELVPGQIPSTKSARSFLERLTERKQILVVLTREDLTARKSVANLPNVHALPADQLNTYDVLHADDVVFSVEALDAFIKAASGANKAEDQNTKEEAK.

The segment at 46 to 102 is disordered; the sequence is KRQGTHATKGRGEVRGGGRKPFRQKGTGRARQGSIRAPHFTGGGTVHGPQPRDYSQR. Residues 62 to 73 show a composition bias toward basic residues; sequence GGRKPFRQKGTG.

Belongs to the universal ribosomal protein uL4 family. Part of the 50S ribosomal subunit.

In terms of biological role, one of the primary rRNA binding proteins, this protein initially binds near the 5'-end of the 23S rRNA. It is important during the early stages of 50S assembly. It makes multiple contacts with different domains of the 23S rRNA in the assembled 50S subunit and ribosome. Its function is as follows. Forms part of the polypeptide exit tunnel. This is Large ribosomal subunit protein uL4 from Corynebacterium urealyticum (strain ATCC 43042 / DSM 7109).